The following is a 284-amino-acid chain: 4-hydroxybenzoate octaprenyltransferase (284 aa).

7 consecutive transmembrane segments (helical) span residues 13-32, 90-110, 112-132, 134-154, 164-184, 200-220, and 224-244; these read FNRP…ALWL, ALML…FTDL, TILL…MKRY, HLPQ…AYSA, LWML…YYAM, ILFG…TLSL, and IGLL…CVGL.

The protein belongs to the UbiA prenyltransferase family. It depends on Mg(2+) as a cofactor.

The protein localises to the cell inner membrane. It catalyses the reaction all-trans-octaprenyl diphosphate + 4-hydroxybenzoate = 4-hydroxy-3-(all-trans-octaprenyl)benzoate + diphosphate. The protein operates within cofactor biosynthesis; ubiquinone biosynthesis. Its function is as follows. Catalyzes the prenylation of para-hydroxybenzoate (PHB) with an all-trans polyprenyl group. Mediates the second step in the final reaction sequence of ubiquinone-8 (UQ-8) biosynthesis, which is the condensation of the polyisoprenoid side chain with PHB, generating the first membrane-bound Q intermediate 3-octaprenyl-4-hydroxybenzoate. The chain is 4-hydroxybenzoate octaprenyltransferase from Marinomonas sp. (strain MWYL1).